Here is a 141-residue protein sequence, read N- to C-terminus: ATP synthase epsilon chain (141 aa).

It belongs to the ATPase epsilon chain family. As to quaternary structure, F-type ATPases have 2 components, CF(1) - the catalytic core - and CF(0) - the membrane proton channel. CF(1) has five subunits: alpha(3), beta(3), gamma(1), delta(1), epsilon(1). CF(0) has three main subunits: a, b and c.

It is found in the cell inner membrane. Its function is as follows. Produces ATP from ADP in the presence of a proton gradient across the membrane. This Burkholderia mallei (strain NCTC 10247) protein is ATP synthase epsilon chain.